Reading from the N-terminus, the 292-residue chain is Probable xyloglucan endotransglucosylase/hydrolase protein 6 (292 aa).

A signal peptide spans Met-1–Ala-30. A GH16 domain is found at Arg-31–Tyr-224. Glu-110 functions as the Nucleophile in the catalytic mechanism. Glu-114 (proton donor) is an active-site residue. Position 114 (Glu-114) interacts with xyloglucan. Asn-118 carries N-linked (GlcNAc...) asparagine glycosylation. Xyloglucan-binding positions include Gln-127 to Asn-129, Asp-137 to Glu-139, Asp-203 to Trp-204, and Gly-208. 2 disulfide bridges follow: Cys-232-Cys-240 and Cys-277-Cys-290. Arg-282 is a xyloglucan binding site.

It belongs to the glycosyl hydrolase 16 family. XTH group 1 subfamily. Contains at least one intrachain disulfide bond essential for its enzymatic activity.

Its subcellular location is the secreted. The protein resides in the cell wall. It localises to the extracellular space. It is found in the apoplast. It carries out the reaction breaks a beta-(1-&gt;4) bond in the backbone of a xyloglucan and transfers the xyloglucanyl segment on to O-4 of the non-reducing terminal glucose residue of an acceptor, which can be a xyloglucan or an oligosaccharide of xyloglucan.. Its function is as follows. Catalyzes xyloglucan endohydrolysis (XEH) and/or endotransglycosylation (XET). Cleaves and religates xyloglucan polymers, an essential constituent of the primary cell wall, and thereby participates in cell wall construction of growing tissues. This Arabidopsis thaliana (Mouse-ear cress) protein is Probable xyloglucan endotransglucosylase/hydrolase protein 6 (XTH6).